Here is a 121-residue protein sequence, read N- to C-terminus: NAD(P)H-quinone oxidoreductase subunit M (121 aa).

Belongs to the complex I NdhM subunit family. As to quaternary structure, NDH-1 can be composed of about 15 different subunits; different subcomplexes with different compositions have been identified which probably have different functions.

Its subcellular location is the cellular thylakoid membrane. It carries out the reaction a plastoquinone + NADH + (n+1) H(+)(in) = a plastoquinol + NAD(+) + n H(+)(out). It catalyses the reaction a plastoquinone + NADPH + (n+1) H(+)(in) = a plastoquinol + NADP(+) + n H(+)(out). Its function is as follows. NDH-1 shuttles electrons from an unknown electron donor, via FMN and iron-sulfur (Fe-S) centers, to quinones in the respiratory and/or the photosynthetic chain. The immediate electron acceptor for the enzyme in this species is believed to be plastoquinone. Couples the redox reaction to proton translocation, and thus conserves the redox energy in a proton gradient. Cyanobacterial NDH-1 also plays a role in inorganic carbon-concentration. In Nostoc punctiforme (strain ATCC 29133 / PCC 73102), this protein is NAD(P)H-quinone oxidoreductase subunit M.